The sequence spans 72 residues: DNA-directed RNA polymerase subunit omega (72 aa).

This sequence belongs to the RNA polymerase subunit omega family. As to quaternary structure, the RNAP catalytic core consists of 2 alpha, 1 beta, 1 beta' and 1 omega subunit. When a sigma factor is associated with the core the holoenzyme is formed, which can initiate transcription.

The catalysed reaction is RNA(n) + a ribonucleoside 5'-triphosphate = RNA(n+1) + diphosphate. Promotes RNA polymerase assembly. Latches the N- and C-terminal regions of the beta' subunit thereby facilitating its interaction with the beta and alpha subunits. This Clostridium botulinum (strain Loch Maree / Type A3) protein is DNA-directed RNA polymerase subunit omega.